The chain runs to 579 residues: Glutamine--tRNA ligase (579 aa).

The 'HIGH' region signature appears at 41–51 (PEPNGYLHIGH). ATP is bound by residues 42–44 (EPN) and 48–54 (HIGHAKA). Residues Asp-74 and Tyr-218 each contribute to the L-glutamine site. ATP-binding positions include Thr-237, 285–286 (RL), and 293–295 (MSK). The short motif at 292-296 (VMSKR) is the 'KMSKS' region element.

This sequence belongs to the class-I aminoacyl-tRNA synthetase family. In terms of assembly, monomer.

It localises to the cytoplasm. The enzyme catalyses tRNA(Gln) + L-glutamine + ATP = L-glutaminyl-tRNA(Gln) + AMP + diphosphate. This is Glutamine--tRNA ligase from Xanthomonas axonopodis pv. citri (strain 306).